Here is a 164-residue protein sequence, read N- to C-terminus: Large ribosomal subunit protein eL21x/eL21w (164 aa).

It belongs to the eukaryotic ribosomal protein eL21 family.

This is Large ribosomal subunit protein eL21x/eL21w (RPL21E) from Arabidopsis thaliana (Mouse-ear cress).